The primary structure comprises 277 residues: NADPH-dependent 7-cyano-7-deazaguanine reductase (277 aa).

83–85 (VES) provides a ligand contact to substrate. Residue 85–86 (SK) coordinates NADPH. Cys184 functions as the Thioimide intermediate in the catalytic mechanism. Asp191 functions as the Proton donor in the catalytic mechanism. 223-224 (HE) is a binding site for substrate. Residue 252–253 (RG) coordinates NADPH.

The protein belongs to the GTP cyclohydrolase I family. QueF type 2 subfamily. As to quaternary structure, homodimer.

It is found in the cytoplasm. The catalysed reaction is 7-aminomethyl-7-carbaguanine + 2 NADP(+) = 7-cyano-7-deazaguanine + 2 NADPH + 3 H(+). Its pathway is tRNA modification; tRNA-queuosine biosynthesis. Functionally, catalyzes the NADPH-dependent reduction of 7-cyano-7-deazaguanine (preQ0) to 7-aminomethyl-7-deazaguanine (preQ1). This chain is NADPH-dependent 7-cyano-7-deazaguanine reductase, found in Cupriavidus metallidurans (strain ATCC 43123 / DSM 2839 / NBRC 102507 / CH34) (Ralstonia metallidurans).